The primary structure comprises 304 residues: MASNIKIVFFGTGGSWPTPIRAMPGVGIQIDDVFNLFDCGEGTQKQIMKSKWSFMSIDNIFITHFHGDHFLGLIGLVQSMSFNNRTKDLNIFGPRGAIGIISNAINIGYYTLRFRINVYELEPDKTYDLGKFLLKTTLNDHPVPALSYTIEEKDIIRVDPQKAKELGIPSKIIEKIRDNGTYEYRGRKYSIDEISGGIRKGRKIVYTGDTKPMQKMADFAKHADVLIHDTTTDSSFEPAVNQFGHSSAKQAARIARDAGVSRLFLYHYSPRITDVSPLVDDARAEFQESYASEDLMEYEVKVKH.

Zn(2+) is bound by residues His64, His66, Asp68, His69, His141, Asp209, and His267. The active-site Proton acceptor is the Asp68.

This sequence belongs to the RNase Z family. In terms of assembly, homodimer. Zn(2+) is required as a cofactor.

The enzyme catalyses Endonucleolytic cleavage of RNA, removing extra 3' nucleotides from tRNA precursor, generating 3' termini of tRNAs. A 3'-hydroxy group is left at the tRNA terminus and a 5'-phosphoryl group is left at the trailer molecule.. In terms of biological role, zinc phosphodiesterase, which displays some tRNA 3'-processing endonuclease activity. Probably involved in tRNA maturation, by removing a 3'-trailer from precursor tRNA. This is Ribonuclease Z from Thermoplasma volcanium (strain ATCC 51530 / DSM 4299 / JCM 9571 / NBRC 15438 / GSS1).